We begin with the raw amino-acid sequence, 77 residues long: MKKLLISFIRFYQIFISPLKPPTCRFYPTCSHYGLEAVKRFGAIKGGWLTIKRILKCHPFHPGGFDPVPEKQENGKS.

The protein belongs to the UPF0161 family.

The protein localises to the cell membrane. Functionally, could be involved in insertion of integral membrane proteins into the membrane. The polypeptide is Putative membrane protein insertion efficiency factor (Geobacillus sp. (strain WCH70)).